The following is a 73-amino-acid chain: ATP synthase subunit 9, mitochondrial (73 aa).

Helical transmembrane passes span 12–32 (VAAL…AALI) and 50–70 (ILGF…SFLL).

Belongs to the ATPase C chain family. As to quaternary structure, F-type ATPases have 2 components, CF(1) - the catalytic core - and CF(0) - the membrane proton channel. CF(1) has five subunits: alpha(3), beta(3), gamma(1), delta(1), epsilon(1). CF(0) has three main subunits: a, b and c.

The protein localises to the mitochondrion inner membrane. Mitochondrial membrane ATP synthase (F(1)F(0) ATP synthase or Complex V) produces ATP from ADP in the presence of a proton gradient across the membrane which is generated by electron transport complexes of the respiratory chain. F-type ATPases consist of two structural domains, F(1) - containing the extramembraneous catalytic core and F(0) - containing the membrane proton channel, linked together by a central stalk and a peripheral stalk. During catalysis, ATP synthesis in the catalytic domain of F(1) is coupled via a rotary mechanism of the central stalk subunits to proton translocation. Part of the complex F(0) domain. A homomeric c-ring of probably 10 subunits is part of the complex rotary element. The polypeptide is ATP synthase subunit 9, mitochondrial (ATP9) (Mycosarcoma maydis (Corn smut fungus)).